Here is a 236-residue protein sequence, read N- to C-terminus: NADH-quinone oxidoreductase subunit C (236 aa).

The interval 1-20 (MSPPNQDAQEGRPDSPTAEV) is disordered.

The protein belongs to the complex I 30 kDa subunit family. In terms of assembly, NDH-1 is composed of 14 different subunits. Subunits NuoB, C, D, E, F, and G constitute the peripheral sector of the complex.

Its subcellular location is the cell membrane. The catalysed reaction is a quinone + NADH + 5 H(+)(in) = a quinol + NAD(+) + 4 H(+)(out). Functionally, NDH-1 shuttles electrons from NADH, via FMN and iron-sulfur (Fe-S) centers, to quinones in the respiratory chain. The immediate electron acceptor for the enzyme in this species is believed to be a menaquinone. Couples the redox reaction to proton translocation (for every two electrons transferred, four hydrogen ions are translocated across the cytoplasmic membrane), and thus conserves the redox energy in a proton gradient. The sequence is that of NADH-quinone oxidoreductase subunit C from Mycobacterium tuberculosis (strain ATCC 25177 / H37Ra).